The sequence spans 471 residues: Venom prothrombin activator vestarin-D2 (471 aa).

The signal sequence occupies residues 1–20 (MAPQLLLCLILTFLWSLPEA). Positions 21 to 40 (ESNVFLKSNVANRFLQRTKR) are excised as a propeptide. A Gla domain is found at 41–86 (ANSIFEEIRPGNIERECVEEKCSKEEAREVFQDNEKTEAFWTVYVD). Residues glutamate 46, glutamate 47, glutamate 54, glutamate 56, glutamate 59, glutamate 60, glutamate 65, glutamate 66, glutamate 69, and glutamate 75 each carry the 4-carboxyglutamate modification. Cysteine 57 and cysteine 62 form a disulfide bridge. One can recognise an EGF-like 1; calcium-binding domain in the interval 86-122 (DGDQCLSNPCHYRGTCKDGIGSYTCTCLPGYEGKNCE). 10 disulfides stabilise this stretch: cysteine 90–cysteine 101, cysteine 95–cysteine 110, cysteine 112–cysteine 121, cysteine 129–cysteine 140, cysteine 136–cysteine 149, cysteine 151–cysteine 164, cysteine 172–cysteine 333, cysteine 233–cysteine 238, cysteine 381–cysteine 395, and cysteine 406–cysteine 434. Serine 92 carries an O-linked (Hex...) serine glycan. Residues 129 to 164 (CRLFNGNCWHFCKTVQNDTQCSCAEGYRLGVDGFSC) form the EGF-like 2 domain. Positions 182 to 226 (REASLPDFHFSDDYDAIDENNLVETVQSQSATLLKKSDNPSPDIR) are cleaved as a propeptide — activation peptide. The Peptidase S1 domain occupies 227–458 (IVSGLDCKLG…FIPWIKTIMR (232 aa)). The active-site Charge relay system is the histidine 268. An N-linked (GlcNAc...) asparagine glycan is attached at asparagine 271. The active-site Charge relay system is aspartate 313. Catalysis depends on serine 410, which acts as the Charge relay system.

Belongs to the peptidase S1 family. Snake venom subfamily. As to quaternary structure, heterodimer of a light chain and a heavy chain; disulfide-linked. Post-translationally, the vitamin K-dependent, enzymatic carboxylation of some glutamate residues allows the modified protein to bind calcium. As to expression, expressed by the venom gland.

The protein resides in the secreted. It catalyses the reaction Selective cleavage of Arg-|-Thr and then Arg-|-Ile bonds in prothrombin to form thrombin.. Its function is as follows. Snake prothrombin activator that attacks the hemostatic system of prey. This protein is functionally similar to blood coagulation factor Xa. In Demansia vestigiata (Lesser black whip snake), this protein is Venom prothrombin activator vestarin-D2.